We begin with the raw amino-acid sequence, 241 residues long: Meiotically up-regulated gene 130 protein (241 aa).

The protein localises to the mitochondrion. Its function is as follows. Has a role in meiosis. The chain is Meiotically up-regulated gene 130 protein (mug130) from Schizosaccharomyces pombe (strain 972 / ATCC 24843) (Fission yeast).